We begin with the raw amino-acid sequence, 224 residues long: PKHD-type hydroxylase CYB_2270 (224 aa).

The Fe2OG dioxygenase domain maps to 78 to 176 (LIHSILISCY…RYAAVSWVQS (99 aa)). Fe cation-binding residues include histidine 96, aspartate 98, and histidine 157. A 2-oxoglutarate-binding site is contributed by arginine 167.

The cofactor is Fe(2+). It depends on L-ascorbate as a cofactor.

The sequence is that of PKHD-type hydroxylase CYB_2270 from Synechococcus sp. (strain JA-2-3B'a(2-13)) (Cyanobacteria bacterium Yellowstone B-Prime).